Here is a 2363-residue protein sequence, read N- to C-terminus: Spectrin beta chain, non-erythrocytic 1 (2363 aa).

Thr-2 is modified (N-acetylthreonine). The segment at Thr-2–His-275 is actin-binding. A phosphoserine mark is found at Ile-14 and Ser-36. 2 consecutive Calponin-homology (CH) domains span residues Ala-54–Gln-158 and Lys-173–Ser-278. The residue at position 90 (Lys-90) is an N6-acetyllysine. Ser-228 carries the phosphoserine modification. 15 Spectrin repeats span residues Met-303–Arg-411, Leu-423–Glu-525, Leu-530–Glu-636, Arg-639–Glu-742, Leu-745–Asp-847, Ala-850–Leu-952, Ile-957–Glu-1060, Lys-1063–Ser-1166, Ala-1170–Lys-1259, Asp-1276–Leu-1376, Lys-1381–Leu-1482, Glu-1486–Glu-1590, His-1592–Glu-1696, His-1698–Leu-1801, and Tyr-1805–Leu-1907. 6 positions are modified to phosphoserine: Ser-817, Ser-903, Ser-1057, Ser-1076, Ser-1079, and Ser-1237. Phosphoserine occurs at positions 1388, 1447, and 1557. The segment at Ile-1563–Glu-2093 is interaction with ANK2. A Phosphotyrosine modification is found at Tyr-1805. An N6-acetyllysine mark is found at Lys-1815, Lys-1913, and Lys-1989. 2 Spectrin repeats span residues Phe-1914 to Arg-2014 and Glu-2018 to Lys-2097. Residues Arg-2089–Glu-2193 are disordered. Ser-2102, Ser-2127, and Ser-2137 each carry phosphoserine. Residues Ser-2115–Gly-2130 are compositionally biased toward polar residues. Residue Thr-2146 is modified to Phosphothreonine. Ser-2147 carries the post-translational modification Phosphoserine. The segment at Glu-2148 to Lys-2176 is mediates interaction with CAMSAP1. Phosphothreonine is present on Thr-2158. Phosphoserine occurs at positions 2159, 2160, 2163, 2164, and 2168. Thr-2170 is modified (phosphothreonine). A Phosphoserine modification is found at Ser-2183. Residues Thr-2186 and Thr-2194 each carry the phosphothreonine modification. Positions Ala-2196–Ser-2306 constitute a PH domain. The tract at residues Asp-2308–Lys-2363 is disordered. Phosphoserine is present on residues Ser-2313 and Ser-2318. The segment covering Ser-2313 to Thr-2327 has biased composition (low complexity). Position 2319 is a phosphothreonine (Thr-2319). Ser-2323 is a glycosylation site (O-linked (GlcNAc) serine). Position 2327 is a phosphothreonine (Thr-2327). Residues Leu-2328–Ser-2340 are compositionally biased toward polar residues. A phosphoserine mark is found at Ser-2339 and Ser-2340. The span at Pro-2341–Phe-2356 shows a compositional bias: basic and acidic residues.

It belongs to the spectrin family. In terms of assembly, interacts with ANK2. Interacts with CPNE4 (via VWFA domain). Like erythrocyte spectrin, the spectrin-like proteins are capable to form dimers which can further associate to tetramers. Interacts with CAMSAP1. Can form heterodimers with SPTAN1. As to expression, isoform 2 is present in brain, heart, kidney and liver (at protein level).

It localises to the cytoplasm. The protein resides in the cytoskeleton. It is found in the endomembrane system. The protein localises to the myofibril. Its subcellular location is the sarcomere. It localises to the m line. The protein resides in the cytosol. It is found in the cell membrane. Its function is as follows. Fodrin, which seems to be involved in secretion, interacts with calmodulin in a calcium-dependent manner and is thus candidate for the calcium-dependent movement of the cytoskeleton at the membrane. Plays a critical role in central nervous system development and function. In Mus musculus (Mouse), this protein is Spectrin beta chain, non-erythrocytic 1 (Sptbn1).